Consider the following 500-residue polypeptide: Probable cytosol aminopeptidase (500 aa).

Positions 267 and 272 each coordinate Mn(2+). Lys279 is an active-site residue. Residues Asp290, Asp349, and Glu351 each contribute to the Mn(2+) site. Residue Arg353 is part of the active site.

This sequence belongs to the peptidase M17 family. It depends on Mn(2+) as a cofactor.

It is found in the cytoplasm. It carries out the reaction Release of an N-terminal amino acid, Xaa-|-Yaa-, in which Xaa is preferably Leu, but may be other amino acids including Pro although not Arg or Lys, and Yaa may be Pro. Amino acid amides and methyl esters are also readily hydrolyzed, but rates on arylamides are exceedingly low.. The catalysed reaction is Release of an N-terminal amino acid, preferentially leucine, but not glutamic or aspartic acids.. In terms of biological role, presumably involved in the processing and regular turnover of intracellular proteins. Catalyzes the removal of unsubstituted N-terminal amino acids from various peptides. In Tolumonas auensis (strain DSM 9187 / NBRC 110442 / TA 4), this protein is Probable cytosol aminopeptidase.